The primary structure comprises 339 residues: UDP-3-O-acylglucosamine N-acyltransferase (339 aa).

The Proton acceptor role is filled by histidine 251.

It belongs to the transferase hexapeptide repeat family. LpxD subfamily. Homotrimer.

It catalyses the reaction a UDP-3-O-[(3R)-3-hydroxyacyl]-alpha-D-glucosamine + a (3R)-hydroxyacyl-[ACP] = a UDP-2-N,3-O-bis[(3R)-3-hydroxyacyl]-alpha-D-glucosamine + holo-[ACP] + H(+). The protein operates within bacterial outer membrane biogenesis; LPS lipid A biosynthesis. Its function is as follows. Catalyzes the N-acylation of UDP-3-O-acylglucosamine using 3-hydroxyacyl-ACP as the acyl donor. Is involved in the biosynthesis of lipid A, a phosphorylated glycolipid that anchors the lipopolysaccharide to the outer membrane of the cell. The sequence is that of UDP-3-O-acylglucosamine N-acyltransferase from Paramagnetospirillum magneticum (strain ATCC 700264 / AMB-1) (Magnetospirillum magneticum).